A 373-amino-acid polypeptide reads, in one-letter code: Indole glucosinolate O-methyltransferase 3 (373 aa).

Positions 217, 240, 260, 261, and 274 each coordinate S-adenosyl-L-homocysteine. His-278 serves as the catalytic Proton acceptor.

Belongs to the class I-like SAM-binding methyltransferase superfamily. Cation-independent O-methyltransferase family.

It functions in the pathway secondary metabolite biosynthesis. Involved in indole glucosinolate biosynthesis. Catalyzes methoxylation reactions of the glucosinolate indole ring. Converts the hydroxy intermediates 4-hydroxy-indol-3-yl-methylglucosinolate (4OH-I3M) and 1-hydroxy-indol-3-yl-methylglucosinolate (1OH-I3M) to 4-methoxy-indol-3-yl-methylglucosinolate (4MO-I3M) and 1-methoxy-indol-3-yl-methylglucosinolate(1MO-I3M), respectively. This is Indole glucosinolate O-methyltransferase 3 from Arabidopsis thaliana (Mouse-ear cress).